We begin with the raw amino-acid sequence, 304 residues long: Putative S-adenosyl-L-methionine-dependent methyltransferase MSMEG_1481/MSMEI_1445 (304 aa).

S-adenosyl-L-methionine is bound by residues Asp-127 and 156–157; that span reads DL.

This sequence belongs to the UPF0677 family.

In terms of biological role, exhibits S-adenosyl-L-methionine-dependent methyltransferase activity. The protein is Putative S-adenosyl-L-methionine-dependent methyltransferase MSMEG_1481/MSMEI_1445 of Mycolicibacterium smegmatis (strain ATCC 700084 / mc(2)155) (Mycobacterium smegmatis).